The chain runs to 141 residues: VLSPEDKNNVKAAWSKVGGQAGDYGAEALERMFLSFPTTKTYFPHFDLSHGSAQVKGHGKKVGEALTTAVNHMDDLPGALSTLSDLHAYKLRVDPVNFKLLSHCLLVTLACHNPGEFTPAVHASLDKFLASVSTVLTSKYR.

The 141-residue stretch at 1 to 141 (VLSPEDKNNV…VSTVLTSKYR (141 aa)) folds into the Globin domain. An O2-binding site is contributed by His58. Position 87 (His87) interacts with heme b.

It belongs to the globin family. Heterotetramer of two alpha chains and two beta chains. As to expression, red blood cells.

Involved in oxygen transport from the lung to the various peripheral tissues. The protein is Hemoglobin subunit alpha-1 of Tadarida brasiliensis (Brazilian free-tailed bat).